The following is a 461-amino-acid chain: MENLTPRQIVEYLDKYIIGQEAAKKAVAVALRNRYRRKLLPPHLKDEIIPKNILMIGPTGVGKTEIARRLAKLIKAPFVKVEATKFTEVGYVGRDVEGMIRDLVETSLRMVREEKIKMVEDKAYNLAVERLSEIMIPNPKKENIKNPFEMFFGGIREDAAKTDPAYDELNYRRRELQDKIKKGFLDNEMVEIEVEEQKTPMVEVFGVGGIEEMGLNFQDILGGLIPPRRKKRRVTVKEALKILTQQEAQKLIDMDEVQREAIKRAEEDGIVFLDEIDKIASTGNTHGPDVSRGGVQRDILPIVEGSTVLTKYGPVKTDHILFIAAGAFHMSKPSDLIPELQGRFPIRVELKSLTVEDFKKILTVPENALTKQYVELLATEGVNLKFTEDSLEEIAKMAYTVNERNENIGARRLITILEKVLEDLSFNAPEMWGQTVVIDRKFVQDKLSEIVHDSDLSRYIL.

ATP-binding positions include Ile-18, 60 to 65 (GVGKTE), Asp-274, Glu-339, and Arg-411.

It belongs to the ClpX chaperone family. HslU subfamily. In terms of assembly, a double ring-shaped homohexamer of HslV is capped on each side by a ring-shaped HslU homohexamer. The assembly of the HslU/HslV complex is dependent on binding of ATP.

It localises to the cytoplasm. Its function is as follows. ATPase subunit of a proteasome-like degradation complex; this subunit has chaperone activity. The binding of ATP and its subsequent hydrolysis by HslU are essential for unfolding of protein substrates subsequently hydrolyzed by HslV. HslU recognizes the N-terminal part of its protein substrates and unfolds these before they are guided to HslV for hydrolysis. The polypeptide is ATP-dependent protease ATPase subunit HslU (Carboxydothermus hydrogenoformans (strain ATCC BAA-161 / DSM 6008 / Z-2901)).